The following is a 98-amino-acid chain: Derivative of benzaldehyde biosynthesis cluster protein C (98 aa).

The protein belongs to the YciI family.

It participates in secondary metabolite biosynthesis. Its function is as follows. Part of the gene cluster that mediates the biosynthesis of the antibiotic 2,4-dihydroxy-3-methyl-6-(2-oxopropyl)benzaldehyde (DHMBA) and its derivatives. The direct non-reducing polyketide synthase dbaI product is 2,4-dihydroxy-3-methyl-6-(2-oxopropyl)benzaldehyde (DHMBA), produced by condensation of one acetyl-CoA starter unit with 4 malonyl-CoA units and one methylation step. The FAD-dependent monooxygenase dbaH is responsible for the synthesis of yellow pigments derived from the oxidation of DHMBA. The roles of dbaB, C, E and F have still to be determined. This is Derivative of benzaldehyde biosynthesis cluster protein C from Emericella nidulans (strain FGSC A4 / ATCC 38163 / CBS 112.46 / NRRL 194 / M139) (Aspergillus nidulans).